The sequence spans 470 residues: Glutamate--tRNA ligase 1 (470 aa).

Positions 15–25 (PSPTGTMHIGT) match the 'HIGH' region motif. A 'KMSKS' region motif is present at residues 241–245 (KLSKR). Residue lysine 244 participates in ATP binding.

The protein belongs to the class-I aminoacyl-tRNA synthetase family. Glutamate--tRNA ligase type 1 subfamily. As to quaternary structure, monomer.

The protein resides in the cytoplasm. It catalyses the reaction tRNA(Glu) + L-glutamate + ATP = L-glutamyl-tRNA(Glu) + AMP + diphosphate. In terms of biological role, catalyzes the attachment of glutamate to tRNA(Glu) in a two-step reaction: glutamate is first activated by ATP to form Glu-AMP and then transferred to the acceptor end of tRNA(Glu). This is Glutamate--tRNA ligase 1 from Jannaschia sp. (strain CCS1).